Reading from the N-terminus, the 440-residue chain is Chromosomal replication initiator protein DnaA (440 aa).

A domain I, interacts with DnaA modulators region spans residues 1-74; it reads MNPSQILENL…VQSGNKAIIN (74 aa). Positions 74–99 are domain II; the sequence is NIQAQSTKQSNKSTKIDIAHIQAQST. The domain III, AAA+ region stretch occupies residues 100–316; that stretch reads ILNPSFTFES…GIIISLNAYA (217 aa). Residues glycine 146, glycine 148, lysine 149, and threonine 150 each coordinate ATP. The domain IV, binds dsDNA stretch occupies residues 317–440; sequence TILGQEITLE…KNKILIKSQS (124 aa).

The protein belongs to the DnaA family. In terms of assembly, oligomerizes as a right-handed, spiral filament on DNA at oriC.

It is found in the cytoplasm. In terms of biological role, plays an essential role in the initiation and regulation of chromosomal replication. ATP-DnaA binds to the origin of replication (oriC) to initiate formation of the DNA replication initiation complex once per cell cycle. Binds the DnaA box (a 9 base pair repeat at the origin) and separates the double-stranded (ds)DNA. Forms a right-handed helical filament on oriC DNA; dsDNA binds to the exterior of the filament while single-stranded (ss)DNA is stabiized in the filament's interior. The ATP-DnaA-oriC complex binds and stabilizes one strand of the AT-rich DNA unwinding element (DUE), permitting loading of DNA polymerase. After initiation quickly degrades to an ADP-DnaA complex that is not apt for DNA replication. Binds acidic phospholipids. The sequence is that of Chromosomal replication initiator protein DnaA from Campylobacter jejuni subsp. doylei (strain ATCC BAA-1458 / RM4099 / 269.97).